The primary structure comprises 392 residues: Formate-dependent phosphoribosylglycinamide formyltransferase (392 aa).

N(1)-(5-phospho-beta-D-ribosyl)glycinamide-binding positions include 22-23 (EL) and E82. ATP-binding positions include R114, K155, 160–165 (SSGKGQ), 195–198 (EKII), and E203. Residues 119-308 (VLVSKKLNIL…EFALHVRSFL (190 aa)) enclose the ATP-grasp domain. E267 and E279 together coordinate Mg(2+). Residues D286, K355, and 362 to 363 (RR) contribute to the N(1)-(5-phospho-beta-D-ribosyl)glycinamide site.

It belongs to the PurK/PurT family. Homodimer.

The enzyme catalyses N(1)-(5-phospho-beta-D-ribosyl)glycinamide + formate + ATP = N(2)-formyl-N(1)-(5-phospho-beta-D-ribosyl)glycinamide + ADP + phosphate + H(+). It participates in purine metabolism; IMP biosynthesis via de novo pathway; N(2)-formyl-N(1)-(5-phospho-D-ribosyl)glycinamide from N(1)-(5-phospho-D-ribosyl)glycinamide (formate route): step 1/1. Functionally, involved in the de novo purine biosynthesis. Catalyzes the transfer of formate to 5-phospho-ribosyl-glycinamide (GAR), producing 5-phospho-ribosyl-N-formylglycinamide (FGAR). Formate is provided by PurU via hydrolysis of 10-formyl-tetrahydrofolate. The sequence is that of Formate-dependent phosphoribosylglycinamide formyltransferase from Wigglesworthia glossinidia brevipalpis.